The primary structure comprises 473 residues: Purple acid phosphatase 1 (473 aa).

The first 38 residues, 1-38 (MRLVVVGLWCLILGLILNPTKFCDAGVTSSYVRKSLSA), serve as a signal peptide directing secretion. Asparagine 118 carries an N-linked (GlcNAc...) asparagine glycan. A Fe cation-binding site is contributed by aspartate 172. N-linked (GlcNAc...) asparagine glycosylation occurs at asparagine 180. Fe cation is bound by residues aspartate 201 and tyrosine 204. Aspartate 201 provides a ligand contact to Mn(2+). Asparagine 238 contributes to the Mn(2+) binding site. A substrate-binding site is contributed by asparagine 238. Asparagine 311 is a glycosylation site (N-linked (GlcNAc...) asparagine). Histidine 323 lines the Mn(2+) pocket. The active-site Proton donor is the histidine 333. Residue histidine 360 coordinates Mn(2+). Substrate is bound at residue 360–362 (HVH). Residue histidine 362 coordinates Fe cation. Asparagine 433 carries N-linked (GlcNAc...) asparagine glycosylation.

This sequence belongs to the metallophosphoesterase superfamily. Purple acid phosphatase family. In terms of assembly, homodimer; disulfide-linked. Fe cation serves as cofactor. Mn(2+) is required as a cofactor. Requires Zn(2+) as cofactor. It depends on Cu(2+) as a cofactor. The cofactor is Mg(2+).

The protein resides in the secreted. It carries out the reaction a phosphate monoester + H2O = an alcohol + phosphate. The chain is Purple acid phosphatase 1 (PAP1) from Ipomoea batatas (Sweet potato).